Here is a 342-residue protein sequence, read N- to C-terminus: Methyltransferase ungE' (342 aa).

Belongs to the methyltransferase superfamily.

It functions in the pathway secondary metabolite biosynthesis. Functionally, methyltransferase; part of the gene cluster that mediates the biosynthesis of the unguisins, gamma-aminobutyric acid (GABA)-containing fungal cyclic heptapeptides with the amino acid sequence cyclo-(D-Ala1-D-Val2-L-Leu3-beta-MePhe4-D-Ala5-D-Trp6-GABA7) for unguisin H and cyclo-(D-Ala1-D-Ala2-L-Leu3-beta-MePhe4-D-Ala5-D-Trp6-GABA7) for unguisin I. Within the pathway, the methyltransferase ungE' is probably involved in the synthesis of the (2R,3R)-beta-methylphenylalanine residue incorporated by the module 4 of the nonribosomal peptide synthetase (NRPS) ungA'. The alanine racemase ungC' catalyzes the interconversion of L-alanine and D-alanine, providing the D-alanine which is accepted by the first adenylation domain of ungA'. UngA' is the main enzyme within the cluster which condenses the 7 residues using its respective 7 modules. The terminal condensation domain (Ct) is involved in cyclization with D-alanine and thereby releasing of unguisins H and I. Finally, the hydrolase ungD' catalyzes the hydrolysis between the D-tryptophan and GABA residues of unguisins H and I to produce the corresponding linear peptides. The sequence is that of Methyltransferase ungE' from Aspergillus campestris (strain IBT 28561).